An 840-amino-acid polypeptide reads, in one-letter code: Probable inorganic carbon transporter subunit DabA 2 (840 aa).

4 residues coordinate Zn(2+): Cys356, Asp358, His540, and Cys555.

The protein belongs to the inorganic carbon transporter (TC 9.A.2) DabA family. In terms of assembly, forms a complex with DabB. Zn(2+) is required as a cofactor.

It is found in the cell inner membrane. In terms of biological role, part of an energy-coupled inorganic carbon pump. This Bradyrhizobium sp. (strain ORS 278) protein is Probable inorganic carbon transporter subunit DabA 2.